Reading from the N-terminus, the 234-residue chain is Small ribosomal subunit protein uS2 (234 aa).

This sequence belongs to the universal ribosomal protein uS2 family.

In Prochlorococcus marinus subsp. pastoris (strain CCMP1986 / NIES-2087 / MED4), this protein is Small ribosomal subunit protein uS2.